A 1450-amino-acid chain; its full sequence is ABC transporter G family member 37 (1450 aa).

An ABC transporter 1 domain is found at 175-447 (VKLTGAKTHE…FEDCGFRCPE (273 aa)). An ATP-binding site is contributed by 207–214 (GPPSCGKT). The 213-residue stretch at 525–737 (ELFIACISRE…GEIGLSVNEF (213 aa)) folds into the ABC transmembrane type-2 1 domain. The next 6 helical transmembrane spans lie at 544-564 (VYIF…TVFI), 581-601 (ALFF…SMTA), 615-635 (FYPA…LSFF), 661-681 (FILL…LAAI), 687-707 (ASIT…GFVI), and 773-793 (LCAL…ALTF). The interval 810 to 838 (SELQGTEKSTEDSSVRKKTTDSPVKTEEE) is disordered. Basic and acidic residues predominate over residues 817–838 (KSTEDSSVRKKTTDSPVKTEEE). The ABC transporter 2 domain maps to 850–1103 (VTFQDLNYFV…IIEYFESVPE (254 aa)). Position 895–902 (895–902 (GVSGAGKT)) interacts with ATP. The region spanning 1175 to 1389 (GQFKSILWKM…TLNGFISSQY (215 aa)) is the ABC transmembrane type-2 2 domain. The next 7 membrane-spanning stretches (helical) occupy residues 1194 to 1214 (YNLM…ALFW), 1226 to 1246 (MFTV…NNCA), 1282 to 1302 (IPYI…MIGF), 1313 to 1333 (LYSM…LVSI), 1339 to 1359 (VAAI…GFLI), 1365 to 1385 (PGWW…NGFI), and 1422 to 1442 (VTAV…AFFV).

The protein belongs to the ABC transporter superfamily. ABCG family. PDR (TC 3.A.1.205) subfamily. Expressed in roots and, to a lower extent, in seedlings.

It localises to the cell membrane. Functionally, together with ABCG36, regulates auxin homeostasis and responses by playing a dual role in coumarin (and derivatives) and in the auxin precursor indole 3-butyric acid (IBA) efflux transport, thus influencing roots and root hairs development. Mediates coumarin exudation in the rhizosphere, especially in iron (Fe) deficient conditions, with a strong specificity for highly oxygenated compounds such as scopoletin and derivatives, dihydroxyscopoletin, esculetin, fraxin, fraxetin and esculin; these molecules improve plant Fe nutrition. Involved in the cellular detoxification of xenobiotics by promoting the excretion of some auxinic herbicides including 2,4-dichlorophenoxyacetic acid (2,4-D), 4-(2,4-dichlorophenoxy)butyric acid (2,4-DB) and other members of the phenoxyalkanoic acid family as well as the polar auxin transport inhibitor, napthylphthalamic acid (NPA). May be a general defense protein. In Arabidopsis thaliana (Mouse-ear cress), this protein is ABC transporter G family member 37.